The sequence spans 143 residues: Large ribosomal subunit protein uL15 (143 aa).

The segment at 1–54 is disordered; that stretch reads MQLNSIKPAPGAKHPKRRVGRGIGSGLGKTAGRGHKGQKSRAGGFHKVGFEGGQ. Residues 21–31 show a composition bias toward gly residues; that stretch reads RGIGSGLGKTA.

The protein belongs to the universal ribosomal protein uL15 family. As to quaternary structure, part of the 50S ribosomal subunit.

Functionally, binds to the 23S rRNA. The sequence is that of Large ribosomal subunit protein uL15 from Nitrosospira multiformis (strain ATCC 25196 / NCIMB 11849 / C 71).